A 140-amino-acid polypeptide reads, in one-letter code: MLKEFKEFVSRGNVLDLAVGVIIGGAFTSIVKSLVNYLINPLIGLFIGGIDFSDWVLKVAGATFKFGSFINAVINFLIIAFVVFILVKLVNKFLPKKEEQEDDEAEAIENSEIYLKEIRDALVNNPELLSNLKNKEDSTK.

3 consecutive transmembrane segments (helical) span residues 14 to 34 (VLDL…VKSL), 37 to 57 (YLIN…DWVL), and 66 to 86 (FGSF…VFIL).

This sequence belongs to the MscL family. In terms of assembly, homopentamer.

Its subcellular location is the cell membrane. Channel that opens in response to stretch forces in the membrane lipid bilayer. May participate in the regulation of osmotic pressure changes within the cell. The sequence is that of Large-conductance mechanosensitive channel from Pediococcus pentosaceus (strain ATCC 25745 / CCUG 21536 / LMG 10740 / 183-1w).